The chain runs to 685 residues: Glycine--tRNA ligase beta subunit (685 aa).

The protein belongs to the class-II aminoacyl-tRNA synthetase family. In terms of assembly, tetramer of two alpha and two beta subunits.

It localises to the cytoplasm. The enzyme catalyses tRNA(Gly) + glycine + ATP = glycyl-tRNA(Gly) + AMP + diphosphate. The protein is Glycine--tRNA ligase beta subunit of Azotobacter vinelandii (strain DJ / ATCC BAA-1303).